Consider the following 225-residue polypeptide: uncharacterized protein (225 aa).

Residues 166–214 (LNSDVIKDKILAIIENVGEITYEELAEKINIPEEDLEKYLSELKESGDI) form the PCI domain.

This is an uncharacterized protein from Methanocaldococcus jannaschii (strain ATCC 43067 / DSM 2661 / JAL-1 / JCM 10045 / NBRC 100440) (Methanococcus jannaschii).